The sequence spans 428 residues: Glutamyl-tRNA reductase (428 aa).

Substrate-binding positions include 55-58, S114, 119-121, and Q125; these read TCNR and ETQ. C56 functions as the Nucleophile in the catalytic mechanism. 194–199 is a binding site for NADP(+); that stretch reads GAGEMI.

It belongs to the glutamyl-tRNA reductase family. Homodimer.

It carries out the reaction (S)-4-amino-5-oxopentanoate + tRNA(Glu) + NADP(+) = L-glutamyl-tRNA(Glu) + NADPH + H(+). It participates in porphyrin-containing compound metabolism; protoporphyrin-IX biosynthesis; 5-aminolevulinate from L-glutamyl-tRNA(Glu): step 1/2. Catalyzes the NADPH-dependent reduction of glutamyl-tRNA(Glu) to glutamate 1-semialdehyde (GSA). This chain is Glutamyl-tRNA reductase, found in Paraburkholderia xenovorans (strain LB400).